The primary structure comprises 632 residues: tRNA uridine 5-carboxymethylaminomethyl modification enzyme MnmG (632 aa).

Residues 15–20 (GAGHAG), I127, and S182 contribute to the FAD site. 276–290 (GPRYCPSIEDKIVRF) contributes to the NAD(+) binding site. Q373 contributes to the FAD binding site.

Belongs to the MnmG family. In terms of assembly, homodimer. Heterotetramer of two MnmE and two MnmG subunits. The cofactor is FAD.

The protein localises to the cytoplasm. In terms of biological role, NAD-binding protein involved in the addition of a carboxymethylaminomethyl (cmnm) group at the wobble position (U34) of certain tRNAs, forming tRNA-cmnm(5)s(2)U34. This Streptococcus pyogenes serotype M1 protein is tRNA uridine 5-carboxymethylaminomethyl modification enzyme MnmG.